The chain runs to 516 residues: L-amino-acid oxidase (516 aa).

Residues 1-18 form the signal peptide; the sequence is MNVFFMFSLLFLAALGSC. An intrachain disulfide couples Cys-28 to Cys-189. FAD is bound by residues 61 to 62, 81 to 82, Arg-89, and 103 to 106; these read MS, EA, and GPMR. Substrate is bound by residues Arg-106 and His-239. Val-279 contributes to the FAD binding site. An intrachain disulfide couples Cys-349 to Cys-430. Asn-379 is a glycosylation site (N-linked (GlcNAc...) asparagine). Tyr-390 contacts substrate. FAD-binding positions include Glu-475 and 482-487; that span reads GWIDST. Residue 482–483 participates in substrate binding; sequence GW.

The protein belongs to the flavin monoamine oxidase family. FIG1 subfamily. Homodimer; non-covalently linked. Requires FAD as cofactor. In terms of processing, N-glycosylated. In terms of tissue distribution, expressed by the venom gland.

The protein localises to the secreted. The enzyme catalyses an L-alpha-amino acid + O2 + H2O = a 2-oxocarboxylate + H2O2 + NH4(+). In terms of biological role, catalyzes an oxidative deamination of predominantly hydrophobic and aromatic L-amino acids, thus producing hydrogen peroxide that may contribute to the diverse toxic effects of this enzyme. Exhibits diverse biological activities, such as hemorrhage, hemolysis, edema, apoptosis of vascular endothelial cells or tumor cell lines, antibacterial and antiparasitic activities, as well as regulation of platelet aggregation. Effects of snake L-amino oxidases on platelets are controversial, since they either induce aggregation or inhibit agonist-induced aggregation. These different effects are probably due to different experimental conditions. This is L-amino-acid oxidase from Sistrurus catenatus edwardsii (Desert massasauga).